The chain runs to 285 residues: Hydrolase in pqqF 5'region (285 aa).

The CN hydrolase domain occupies 22–258; the sequence is MRVALYQCPP…EALIIGTLDR (237 aa). The active-site Proton acceptor is the Glu-60. The active-site Proton donor is the Lys-131. The active-site Nucleophile is Cys-165.

The protein belongs to the carbon-nitrogen hydrolase superfamily. NIT1/NIT2 family.

The polypeptide is Hydrolase in pqqF 5'region (Pseudomonas protegens (strain DSM 19095 / LMG 27888 / CFBP 6595 / CHA0)).